Consider the following 317-residue polypeptide: HTH-type transcriptional regulator MetR (317 aa).

The 59-residue stretch at 1–59 (MIEVKHLKTLQALRNCGSLAAAAATLHQTQSALSHQFSDLEQRLGFRLFVRKSQPLRFT) folds into the HTH lysR-type domain. A DNA-binding region (H-T-H motif) is located at residues 19–38 (LAAAAATLHQTQSALSHQFS).

Belongs to the LysR transcriptional regulatory family.

The protein localises to the cytoplasm. In terms of biological role, control of the last step in methionine biosynthesis; MetR is a positive activator of the metA, metE and metH genes. It is also a negative regulator of its own expression. The polypeptide is HTH-type transcriptional regulator MetR (metR) (Escherichia coli O157:H7).